Here is a 28-residue protein sequence, read N- to C-terminus: Trypsin inhibitor 4 (28 aa).

Disulfide bonds link C2–C19, C9–C21, and C15–C27.

Belongs to the protease inhibitor I7 (squash-type serine protease inhibitor) family.

It localises to the secreted. Inhibits trypsin. This is Trypsin inhibitor 4 from Luffa aegyptiaca (Sponge gourd).